The following is a 1077-amino-acid chain: Adenylate cyclase type 4 (1077 aa).

Residues 1-28 (MARLFSPRPPPSEDLFYETYYSLSQQYP) lie on the Cytoplasmic side of the membrane. 6 helical membrane-spanning segments follow: residues 29–50 (LLILLLVIVLCALVALPAVAWA), 61–80 (FLTTVLCALGGFSLLLGLAS), 94–117 (GLIWVALLALGYGFLFTGGVVSAW), 120–138 (VSFFLFIIFTVYAMLPLGM), 141–162 (AAAAGVISSLSHLLVLGLYLGW), and 170–190 (LLPQLAANAVLFLCGNVVGAY). Residues 191 to 582 (HKALMERALR…YRLSALPAFK (392 aa)) lie on the Cytoplasmic side of the membrane. Mg(2+)-binding residues include Asp-278, Ile-279, and Asp-322. ATP-binding positions include 278 to 283 (DIVGFT), 320 to 322 (LGD), and Arg-366. The disordered stretch occupies residues 503–524 (TSTPLPEKAFSPQWSLDRSRTP). Ser-517 is modified (phosphoserine). Residue Thr-533 is modified to Phosphothreonine. Helical transmembrane passes span 583–604 (YYAACTFLVFLSNFTIQMLVTT), 608–630 (ALIITYSITFLLFFLLLFVCFSE), and 661–684 (VALGTATILLVFTMAIASLLFLPV). Residues 685 to 717 (SSDCLFLASNVSSVTFNASWEMPGSLPLISIPL) are Extracellular-facing. Residues Asn-694 and Asn-701 are each glycosylated (N-linked (GlcNAc...) asparagine). 3 helical membrane passes run 718–738 (ISIPYSMHCCVLGFLSCSLFL), 746–766 (LLLLLLWLVASCSLFLHSHAW), and 793–809 (MGAIYFFIFFFTLLVLA). At 810-1077 (RQNEYYCRLD…LTRTGSPSAS (268 aa)) the chain is on the cytoplasmic side. Residues Lys-927, 1007–1009 (DIW), 1014–1018 (NVASR), and Lys-1054 each bind ATP.

The protein belongs to the adenylyl cyclase class-4/guanylyl cyclase family. Mg(2+) is required as a cofactor. It depends on Mn(2+) as a cofactor.

It is found in the cell membrane. Its subcellular location is the cytoplasm. It carries out the reaction ATP = 3',5'-cyclic AMP + diphosphate. Its activity is regulated as follows. Activated by forskolin. Insensitive to calcium/calmodulin. Stimulated by GNAS and by the G-protein beta and gamma subunit complex. In terms of biological role, catalyzes the formation of the signaling molecule cAMP in response to G-protein signaling. This Mus musculus (Mouse) protein is Adenylate cyclase type 4 (Adcy4).